The following is a 1001-amino-acid chain: 2-oxoglutarate dehydrogenase E1 component (1001 aa).

This sequence belongs to the alpha-ketoglutarate dehydrogenase family. Homodimer. Part of the 2-oxoglutarate dehydrogenase (OGDH) complex composed of E1 (2-oxoglutarate dehydrogenase), E2 (dihydrolipoamide succinyltransferase) and E3 (dihydrolipoamide dehydrogenase); the complex contains multiple copies of the three enzymatic components (E1, E2 and E3). Thiamine diphosphate serves as cofactor.

The catalysed reaction is N(6)-[(R)-lipoyl]-L-lysyl-[protein] + 2-oxoglutarate + H(+) = N(6)-[(R)-S(8)-succinyldihydrolipoyl]-L-lysyl-[protein] + CO2. Its function is as follows. E1 component of the 2-oxoglutarate dehydrogenase (OGDH) complex which catalyzes the decarboxylation of 2-oxoglutarate, the first step in the conversion of 2-oxoglutarate to succinyl-CoA and CO(2). This is 2-oxoglutarate dehydrogenase E1 component from Brucella anthropi (strain ATCC 49188 / DSM 6882 / CCUG 24695 / JCM 21032 / LMG 3331 / NBRC 15819 / NCTC 12168 / Alc 37) (Ochrobactrum anthropi).